The chain runs to 192 residues: T-cell surface glycoprotein CD3 epsilon chain (192 aa).

An N-terminal signal peptide occupies residues 1 to 21; sequence MQTGNLWQVLGLCLLLVGAWA. The Extracellular segment spans residues 22-111; that stretch reads QDDTEQNPYE…RVCKNCMEVN (90 aa). An Ig-like domain is found at 27–98; sequence QNPYEVSISG…GNTEAAHTLY (72 aa). An intrachain disulfide couples C43 to C84. The chain crosses the membrane as a helical span at residues 112–137; sequence LLEVATIIVVDICVTLGLLLLVYYWS. Topologically, residues 138-192 are cytoplasmic; that stretch reads KSRKAKATPMTRGAGAGGRPRGQNRERPPPVPNPDYEPIRKGQRDLYSGLNQRGV. The interval 146-192 is disordered; sequence PMTRGAGAGGRPRGQNRERPPPVPNPDYEPIRKGQRDLYSGLNQRGV. The tract at residues 160 to 177 is NUMB-binding region; the sequence is QNRERPPPVPNPDYEPIR. The ITAM domain maps to 163–190; the sequence is ERPPPVPNPDYEPIRKGQRDLYSGLNQR. Residues 164–171 form a proline-rich sequence region; it reads RPPPVPNP. Phosphotyrosine is present on residues Y173 and Y184.

As to quaternary structure, the TCR-CD3 complex is composed of a CD3D/CD3E and a CD3G/CD3E heterodimers that preferentially associate with TCRalpha and TCRbeta, respectively, to form TCRalpha/CD3E/CD3G and TCRbeta/CD3G/CD3E trimers. In turn, the hexamer interacts with CD3Z homodimer to form the TCR-CD3 complex. Alternatively, TCRalpha and TCRbeta can be replaced by TCRgamma and TCRdelta. Interacts with CD6. Interacts (via Proline-rich sequence) with NCK1; the interaction is ligand dependent but independent of tyrosine kinase activation. Phosphorylated on Tyr residues after T-cell receptor triggering by LCK in association with CD4/CD8.

The protein resides in the cell membrane. In terms of biological role, part of the TCR-CD3 complex present on T-lymphocyte cell surface that plays an essential role in adaptive immune response. When antigen presenting cells (APCs) activate T-cell receptor (TCR), TCR-mediated signals are transmitted across the cell membrane by the CD3 chains CD3D, CD3E, CD3G and CD3Z. All CD3 chains contain immunoreceptor tyrosine-based activation motifs (ITAMs) in their cytoplasmic domain. Upon TCR engagement, these motifs become phosphorylated by Src family protein tyrosine kinases LCK and FYN, resulting in the activation of downstream signaling pathways. In addition of this role of signal transduction in T-cell activation, CD3E plays an essential role in correct T-cell development. Also participates in internalization and cell surface down-regulation of TCR-CD3 complexes via endocytosis sequences present in CD3E cytosolic region. In addition to its role as a TCR coreceptor, it serves as a receptor for ITPRIPL1. Ligand recognition inhibits T-cell activation by promoting interaction with NCK1, which prevents CD3E-ZAP70 interaction and blocks the ERK-NFkB signaling cascade and calcium influx. This Ovis aries (Sheep) protein is T-cell surface glycoprotein CD3 epsilon chain (CD3E).